The following is a 721-amino-acid chain: Exo beta-1,2-glucooligosaccharide sophorohydrolase (non-reducing end) (721 aa).

An N-terminal signal peptide occupies residues 1-18; sequence MKHIALLTTLLLSASLQA. One can recognise a Glycoamylase-like domain in the interval 474–708; the sequence is NHKLIGWNET…LLWNLFMSHP (235 aa).

Monomer.

The protein localises to the periplasm. It catalyses the reaction [(1-&gt;2)-beta-D-glucosyl](n) + H2O = [(1-&gt;2)-beta-D-glucosyl](n-2) + sophorose. Catalyzes the hydrolysis of linear beta-1,2-glucan and beta-1,2-glucooligosaccharides with degrees of polymerization (DPs) greater than or equal to 4, to produce sophorose. The best substrates are tetra- and pentasaccharides. Acts as an exo-type enzyme that releases sophorose from the non-reducing end of the substrate. It cannot hydrolyze cyclic beta-1,2-glucans. This chain is Exo beta-1,2-glucooligosaccharide sophorohydrolase (non-reducing end), found in Parabacteroides distasonis (strain ATCC 8503 / DSM 20701 / CIP 104284 / JCM 5825 / NCTC 11152).